The chain runs to 569 residues: Mitogen-activated protein kinase 8 (569 aa).

The Protein kinase domain occupies 13–304 (YKIQEVIGKG…AEEALADPYF (292 aa)). ATP contacts are provided by residues 19-27 (IGKGSYGVV) and lysine 42. Aspartate 139 acts as the Proton acceptor in catalysis. Threonine 175 is modified (phosphothreonine). The short motif at 175–177 (TDY) is the TXY element. Phosphotyrosine is present on tyrosine 177. The interval 404–432 (TTVHSAPIPPKDHQNITSQVPQRIPGRTG) is disordered.

Belongs to the protein kinase superfamily. CMGC Ser/Thr protein kinase family. MAP kinase subfamily. In terms of processing, dually phosphorylated on Thr-175 and Tyr-177, which activates the enzyme. Expressed in leaves and panicles.

It carries out the reaction L-seryl-[protein] + ATP = O-phospho-L-seryl-[protein] + ADP + H(+). It catalyses the reaction L-threonyl-[protein] + ATP = O-phospho-L-threonyl-[protein] + ADP + H(+). Activated by threonine and tyrosine phosphorylation. The protein is Mitogen-activated protein kinase 8 (MPK8) of Oryza sativa subsp. japonica (Rice).